Here is a 516-residue protein sequence, read N- to C-terminus: GTPase Obg (516 aa).

The region spanning 4-161 is the Obg domain; it reads PTFVDRVTLH…LEIVLELKVV (158 aa). An OBG-type G domain is found at 162–332; that stretch reads ADIGLVGFPS…LTFAMAGIVE (171 aa). GTP-binding positions include 168–175, 193–197, 214–217, 284–287, and 313–315; these read GFPSAGKS, FTTLV, DVPG, NKVD, and SAA. The Mg(2+) site is built by S175 and T195. An OCT domain is found at 351 to 432; the sequence is PSVDGSDAFT…ENAVVFDFKP (82 aa). The span at 466-491 shows a compositional bias: basic and acidic residues; sequence AMADRAEGETRADVARRLDRPAREDG. The segment at 466-516 is disordered; that stretch reads AMADRAEGETRADVARRLDRPAREDGGAYGPQSYEIGGRDDPDWAEEDLGE.

This sequence belongs to the TRAFAC class OBG-HflX-like GTPase superfamily. OBG GTPase family. As to quaternary structure, monomer. The cofactor is Mg(2+).

Its subcellular location is the cytoplasm. Its function is as follows. An essential GTPase which binds GTP, GDP and possibly (p)ppGpp with moderate affinity, with high nucleotide exchange rates and a fairly low GTP hydrolysis rate. Plays a role in control of the cell cycle, stress response, ribosome biogenesis and in those bacteria that undergo differentiation, in morphogenesis control. This chain is GTPase Obg, found in Nocardioides sp. (strain ATCC BAA-499 / JS614).